We begin with the raw amino-acid sequence, 184 residues long: MVRAWRILQEETDDPRDALYSDESVSLEQLAQVGVEYFKFDADTFEQNDDYLKLKNNRGYSYSDTISVSRATLPDFDAKIKSFFEEHLHTDDEIRFILDGSGYFDVRDLDGRQLRDCWIRIECVKGDLLVLPSGIYHRFTLDKKDYIKALRLFIGVPVWTPHNRPADSMKERLDYVSKYLTATT.

Fe(2+) contacts are provided by H87, H89, E93, and H137. Ni(2+) contacts are provided by H87, H89, E93, and H137.

Belongs to the acireductone dioxygenase (ARD) family. Requires Fe(2+) as cofactor. Ni(2+) serves as cofactor.

Its subcellular location is the cytoplasm. It is found in the nucleus. The enzyme catalyses 1,2-dihydroxy-5-(methylsulfanyl)pent-1-en-3-one + O2 = 4-methylsulfanyl-2-oxobutanoate + formate + 2 H(+). The catalysed reaction is 1,2-dihydroxy-5-(methylsulfanyl)pent-1-en-3-one + O2 = 3-(methylsulfanyl)propanoate + CO + formate + 2 H(+). Its pathway is amino-acid biosynthesis; L-methionine biosynthesis via salvage pathway; L-methionine from S-methyl-5-thio-alpha-D-ribose 1-phosphate: step 5/6. In terms of biological role, catalyzes 2 different reactions between oxygen and the acireductone 1,2-dihydroxy-3-keto-5-methylthiopentene (DHK-MTPene) depending upon the metal bound in the active site. Fe-containing acireductone dioxygenase (Fe-ARD) produces formate and 2-keto-4-methylthiobutyrate (KMTB), the alpha-ketoacid precursor of methionine in the methionine recycle pathway. Ni-containing acireductone dioxygenase (Ni-ARD) produces methylthiopropionate, carbon monoxide and formate, and does not lie on the methionine recycle pathway. The chain is Acireductone dioxygenase from Ciona intestinalis (Transparent sea squirt).